We begin with the raw amino-acid sequence, 185 residues long: Ribosome-recycling factor (185 aa).

This sequence belongs to the RRF family.

The protein resides in the cytoplasm. In terms of biological role, responsible for the release of ribosomes from messenger RNA at the termination of protein biosynthesis. May increase the efficiency of translation by recycling ribosomes from one round of translation to another. The sequence is that of Ribosome-recycling factor from Streptococcus equi subsp. equi (strain 4047).